A 224-amino-acid chain; its full sequence is Type II restriction enzyme BstVI (224 aa).

Belongs to the XhoI type II restriction endonuclease family.

The catalysed reaction is Endonucleolytic cleavage of DNA to give specific double-stranded fragments with terminal 5'-phosphates.. In terms of biological role, a P subtype restriction enzyme that recognizes the double-stranded sequence 5'-CTCGAG-3' and cleaves after C-1. The sequence is that of Type II restriction enzyme BstVI from Geobacillus stearothermophilus (Bacillus stearothermophilus).